Here is a 1372-residue protein sequence, read N- to C-terminus: DNA-directed RNA polymerase subunit beta (1372 aa).

This sequence belongs to the RNA polymerase beta chain family. In terms of assembly, the RNAP catalytic core consists of 2 alpha, 1 beta, 1 beta' and 1 omega subunit. When a sigma factor is associated with the core the holoenzyme is formed, which can initiate transcription.

The enzyme catalyses RNA(n) + a ribonucleoside 5'-triphosphate = RNA(n+1) + diphosphate. Its function is as follows. DNA-dependent RNA polymerase catalyzes the transcription of DNA into RNA using the four ribonucleoside triphosphates as substrates. The chain is DNA-directed RNA polymerase subunit beta from Bradyrhizobium diazoefficiens (strain JCM 10833 / BCRC 13528 / IAM 13628 / NBRC 14792 / USDA 110).